The chain runs to 260 residues: Shikimate dehydrogenase (NADP(+)) (260 aa).

Shikimate contacts are provided by residues 14–16 and Thr60; that span reads SAS. The active-site Proton acceptor is the Lys64. Shikimate-binding residues include Asn85 and Asp100. Residues 121 to 125, 145 to 150, and Phe201 contribute to the NADP(+) site; these read GAGGA and NRTYER. Position 203 (Tyr203) interacts with shikimate. Gly225 contacts NADP(+).

The protein belongs to the shikimate dehydrogenase family. Homodimer.

The enzyme catalyses shikimate + NADP(+) = 3-dehydroshikimate + NADPH + H(+). It participates in metabolic intermediate biosynthesis; chorismate biosynthesis; chorismate from D-erythrose 4-phosphate and phosphoenolpyruvate: step 4/7. Involved in the biosynthesis of the chorismate, which leads to the biosynthesis of aromatic amino acids. Catalyzes the reversible NADPH linked reduction of 3-dehydroshikimate (DHSA) to yield shikimate (SA). The chain is Shikimate dehydrogenase (NADP(+)) from Pyrobaculum neutrophilum (strain DSM 2338 / JCM 9278 / NBRC 100436 / V24Sta) (Thermoproteus neutrophilus).